The primary structure comprises 258 residues: Trans-aconitate 2-methyltransferase (258 aa).

The protein belongs to the methyltransferase superfamily. Tam family.

It localises to the cytoplasm. The enzyme catalyses trans-aconitate + S-adenosyl-L-methionine = (E)-3-(methoxycarbonyl)pent-2-enedioate + S-adenosyl-L-homocysteine. In terms of biological role, catalyzes the S-adenosylmethionine monomethyl esterification of trans-aconitate. The sequence is that of Trans-aconitate 2-methyltransferase from Methylobacterium nodulans (strain LMG 21967 / CNCM I-2342 / ORS 2060).